The primary structure comprises 226 residues: Phosphoglycolate phosphatase (226 aa).

Asp12 acts as the Nucleophile in catalysis. 3 residues coordinate Mg(2+): Asp12, Asp14, and Asp177.

The protein belongs to the HAD-like hydrolase superfamily. CbbY/CbbZ/Gph/YieH family. Requires Mg(2+) as cofactor.

The enzyme catalyses 2-phosphoglycolate + H2O = glycolate + phosphate. The protein operates within organic acid metabolism; glycolate biosynthesis; glycolate from 2-phosphoglycolate: step 1/1. Functionally, specifically catalyzes the dephosphorylation of 2-phosphoglycolate. Is involved in the dissimilation of the intracellular 2-phosphoglycolate formed during the DNA repair of 3'-phosphoglycolate ends, a major class of DNA lesions induced by oxidative stress. This Colwellia psychrerythraea (strain 34H / ATCC BAA-681) (Vibrio psychroerythus) protein is Phosphoglycolate phosphatase.